We begin with the raw amino-acid sequence, 730 residues long: Rap1 GTPase-activating protein 2 (730 aa).

At Ser7 the chain carries Phosphoserine; by PKG/PRKG1; in vitro. Positions 32-53 (ANSSDATLPDRPLSPPLTAPPT) are disordered. Ser45 carries the post-translational modification Phosphoserine. Thr49 carries the post-translational modification Phosphothreonine. One can recognise a Rap-GAP domain in the interval 248–464 (IVSYDEHEVN…RTRAALLDNL (217 aa)). Ser507 is modified (phosphoserine). The interval 509–533 (ETMVGGQKKSHSGGIPGSLSGGISH) is disordered. Phosphoserine occurs at positions 544, 558, 564, 612, and 613. The segment at 552–730 (VKNQSRSPIK…LSHASSGAGH (179 aa)) is disordered. Positions 585-613 (DSTSSTPKTPDGGHSSQEIKSETSSNPSS) are enriched in polar residues. A compositionally biased stretch (basic and acidic residues) spans 618–631 (PNKEKPFMKLKENG). The span at 635-647 (SRSSSSTSSVSST) shows a compositional bias: low complexity. Positions 661-670 (GSQPSTTSPF) are enriched in polar residues. Low complexity predominate over residues 678–687 (SPSPSSESPS). Residues 699 to 712 (RSPTDAKSRNSPRS) are compositionally biased toward polar residues.

In terms of processing, in vitro phosphorylated by cGMP-dependent protein kinase 1 (cGKI) at Ser-7; the phosphorylation probably does not regulate GAP activity. Isoform 1 and isoform 2 are expressed in platelets with isoform 2 being the predominant form. Expressed in lymphocytes, heart, testis and pancreas.

It is found in the cytoplasm. Its subcellular location is the perinuclear region. Its function is as follows. GTPase activator for the nuclear Ras-related regulatory protein RAP-1A (KREV-1), converting it to the putatively inactive GDP-bound state. This Homo sapiens (Human) protein is Rap1 GTPase-activating protein 2 (RAP1GAP2).